The following is a 418-amino-acid chain: Homoaconitase large subunit (418 aa).

[4Fe-4S] cluster is bound by residues Cys292, Cys352, and Cys355.

It belongs to the aconitase/IPM isomerase family. In terms of assembly, heterodimer of HacA and HacB. [4Fe-4S] cluster serves as cofactor.

It catalyses the reaction (2R,3S)-homoisocitrate = cis-homoaconitate + H2O. Its pathway is amino-acid biosynthesis; L-lysine biosynthesis via AAA pathway; L-alpha-aminoadipate from 2-oxoglutarate: step 3/5. Is not inhibited by lysine. Catalyzes the reversible hydration of cis-homoaconitate ((Z)-but-1-ene-1,2,4-tricarboxylate) to homoisocitrate ((1R,2S)-1-hydroxybutane-1,2,4-tricarboxylate). Can catalyze neither the dehydration of (R)-homocitrate ((2R)-2-hydroxybutane-1,2,4-tricarboxylate) into cis-homoaconitate in vitro, nor the reverse reaction. Is not active toward (S)-homocitrate, cis-aconitate or citrate as substrate. The chain is Homoaconitase large subunit (hacA) from Thermus thermophilus (strain ATCC BAA-163 / DSM 7039 / HB27).